A 233-amino-acid polypeptide reads, in one-letter code: Large ribosomal subunit protein uL1 (233 aa).

The protein belongs to the universal ribosomal protein uL1 family. Part of the 50S ribosomal subunit.

Binds directly to 23S rRNA. The L1 stalk is quite mobile in the ribosome, and is involved in E site tRNA release. Functionally, protein L1 is also a translational repressor protein, it controls the translation of the L11 operon by binding to its mRNA. In Nautilia profundicola (strain ATCC BAA-1463 / DSM 18972 / AmH), this protein is Large ribosomal subunit protein uL1.